A 959-amino-acid polypeptide reads, in one-letter code: Isoleucine--tRNA ligase (959 aa).

The 'HIGH' region motif lies at 66–76 (PYANGDIHIGH). Position 592 (Glu-592) interacts with L-isoleucyl-5'-AMP. Residues 633 to 637 (KMSKS) carry the 'KMSKS' region motif. Lys-636 is an ATP binding site. Residues Cys-922, Cys-925, Cys-942, and Cys-945 each coordinate Zn(2+).

It belongs to the class-I aminoacyl-tRNA synthetase family. IleS type 1 subfamily. As to quaternary structure, monomer. Zn(2+) serves as cofactor.

It is found in the cytoplasm. It carries out the reaction tRNA(Ile) + L-isoleucine + ATP = L-isoleucyl-tRNA(Ile) + AMP + diphosphate. Catalyzes the attachment of isoleucine to tRNA(Ile). As IleRS can inadvertently accommodate and process structurally similar amino acids such as valine, to avoid such errors it has two additional distinct tRNA(Ile)-dependent editing activities. One activity is designated as 'pretransfer' editing and involves the hydrolysis of activated Val-AMP. The other activity is designated 'posttransfer' editing and involves deacylation of mischarged Val-tRNA(Ile). The protein is Isoleucine--tRNA ligase of Cupriavidus metallidurans (strain ATCC 43123 / DSM 2839 / NBRC 102507 / CH34) (Ralstonia metallidurans).